The following is a 4486-amino-acid chain: Dynein axonemal heavy chain 9 (4486 aa).

A stem region spans residues 1–1831 (MRLAEERAAL…FANICDAQFL (1831 aa)). Coiled coils occupy residues 381-410 (DLLRSEVEESQRKLQVVSDTLSFFKQEFQD), 504-529 (QSTDFENDVSEFNQKVEDLDRRLGTI), 639-662 (AEGKRMQQKYEDMLSLLEKYETRL), 752-823 (TLLE…TWVT), and 1326-1355 (NINVEAMELECKQFARHIRNLDKEVRAWDA). AAA stretches follow at residues 1832-2053 (YSYE…VLVV), 2113-2334 (ALVR…TRFK), 2440-2688 (EFDP…IFQG), and 2787-3036 (NHNE…EQRY). Residues 1870–1877 (GPAGTGKT), 2151–2158 (GGAGTGKS), 2478–2485 (GTAGTGKS), and 2825–2832 (GVGGSGKQ) each bind ATP. Coiled coils occupy residues 3051–3154 (YQSL…AKAE), 3285–3341 (KRQA…AEVT), and 3640–3675 (LVENLEITKQTAAEVEKKVQEAKVTEVKINEAREHY). The interval 3051–3341 (YQSLLHRHRK…LKCQQEAEVT (291 aa)) is stalk. AAA regions lie at residues 3429-3656 (LMDD…EVEK) and 3866-4092 (LRDF…VLYN).

It belongs to the dynein heavy chain family. Consists of at least two heavy chains and a number of intermediate and light chains. Interacts with ODAD1. As to expression, expressed in upper and lower respiratory airway epithelia (at protein level). Not detected in spermatozoa (at protein level).

The protein localises to the cytoplasm. The protein resides in the cytoskeleton. It is found in the cilium axoneme. Force generating protein required for cilia beating in respiratory epithelia. Produces force towards the minus ends of microtubules. Dynein has ATPase activity; the force-producing power stroke is thought to occur on release of ADP. In Homo sapiens (Human), this protein is Dynein axonemal heavy chain 9.